Consider the following 224-residue polypeptide: Menaquinol:cytochrome c reductase cytochrome b subunit (224 aa).

Residues 37 to 57 (FSAFVYCFGGLTFFVTVIQVL) form a helical membrane-spanning segment. A heme b-binding site is contributed by Tyr42. Cys43 contacts heme c. Positions 91, 94, 108, and 111 each coordinate heme b. Helical transmembrane passes span 96–116 (WGAS…FFQG), 126–146 (WIVG…GYLL), and 195–215 (IHVF…FIMI). 2 residues coordinate heme b: His196 and His211. Heme c-binding residues include Arg216 and Ile220. Ser221 is a binding site for heme b.

Belongs to the cytochrome b family. In terms of assembly, the main subunits of the menaquinol:cytochrome c complex are a Rieske-type iron-sulfur protein (QcrA), a cytochrome b (QcrB) and a cytochrome c (QcrC). Heme b serves as cofactor. Requires heme c as cofactor.

It localises to the cell membrane. In terms of biological role, component of the menaquinol:cytochrome c reductase complex. The chain is Menaquinol:cytochrome c reductase cytochrome b subunit from Bacillus subtilis (strain 168).